Here is a 379-residue protein sequence, read N- to C-terminus: Homoserine O-succinyltransferase (379 aa).

An AB hydrolase-1 domain is found at Asn51–Leu360. Residue Ser157 is the Nucleophile of the active site. Arg227 is a substrate binding site. Catalysis depends on residues Asp323 and His356. Asp357 contacts substrate.

It belongs to the AB hydrolase superfamily. MetX family. In terms of assembly, homodimer.

It is found in the cytoplasm. The catalysed reaction is L-homoserine + succinyl-CoA = O-succinyl-L-homoserine + CoA. It functions in the pathway amino-acid biosynthesis; L-methionine biosynthesis via de novo pathway; O-succinyl-L-homoserine from L-homoserine: step 1/1. Functionally, transfers a succinyl group from succinyl-CoA to L-homoserine, forming succinyl-L-homoserine. The polypeptide is Homoserine O-succinyltransferase (Pseudomonas fluorescens (strain Pf0-1)).